Reading from the N-terminus, the 114-residue chain is N(4)-acetylcytidine amidohydrolase (114 aa).

The 86-residue stretch at 8-93 (TFFEFLTPLV…ALIQEIYPNI (86 aa)) folds into the ASCH domain. Lysine 22 functions as the Proton acceptor in the catalytic mechanism. Residue threonine 25 is the Nucleophile of the active site. Catalysis depends on glutamate 75, which acts as the Proton donor.

The protein belongs to the N(4)-acetylcytidine amidohydrolase family.

The catalysed reaction is N(4)-acetylcytidine + H2O = cytidine + acetate + H(+). The enzyme catalyses N(4)-acetyl-2'-deoxycytidine + H2O = 2'-deoxycytidine + acetate + H(+). It carries out the reaction N(4)-acetylcytosine + H2O = cytosine + acetate + H(+). Catalyzes the hydrolysis of N(4)-acetylcytidine (ac4C). In Vibrio cholerae serotype O1 (strain ATCC 39541 / Classical Ogawa 395 / O395), this protein is N(4)-acetylcytidine amidohydrolase.